The following is a 617-amino-acid chain: Glutamyl-tRNA(Gln) amidotransferase subunit B, mitochondrial (617 aa).

The transit peptide at 1-56 (MPRIPTSVLGKYLLSGQISRQGCVGARQITRHSALPSAAVSVANSARLLHVSSETV) directs the protein to the mitochondrion. Residues 53–90 (SETVPPPPAQPVPLRKQLKDEAKKAKKQGKKKSKGDSQ) form a disordered region. The span at 76–85 (KAKKQGKKKS) shows a compositional bias: basic residues.

The protein belongs to the GatB/GatE family. GatB subfamily. In terms of assembly, subunit of the heterotrimeric GatCAB amidotransferase (AdT) complex, composed of A, B and C subunits.

It localises to the mitochondrion. The catalysed reaction is L-glutamyl-tRNA(Gln) + L-glutamine + ATP + H2O = L-glutaminyl-tRNA(Gln) + L-glutamate + ADP + phosphate + H(+). Its function is as follows. Allows the formation of correctly charged Gln-tRNA(Gln) through the transamidation of misacylated Glu-tRNA(Gln) in the mitochondria. The reaction takes place in the presence of glutamine and ATP through an activated gamma-phospho-Glu-tRNA(Gln). This chain is Glutamyl-tRNA(Gln) amidotransferase subunit B, mitochondrial, found in Fusarium vanettenii (strain ATCC MYA-4622 / CBS 123669 / FGSC 9596 / NRRL 45880 / 77-13-4) (Fusarium solani subsp. pisi).